The sequence spans 299 residues: ATP phosphoribosyltransferase (299 aa).

The protein belongs to the ATP phosphoribosyltransferase family. Long subfamily. Requires Mg(2+) as cofactor.

It localises to the cytoplasm. It carries out the reaction 1-(5-phospho-beta-D-ribosyl)-ATP + diphosphate = 5-phospho-alpha-D-ribose 1-diphosphate + ATP. Its pathway is amino-acid biosynthesis; L-histidine biosynthesis; L-histidine from 5-phospho-alpha-D-ribose 1-diphosphate: step 1/9. Feedback inhibited by histidine. Functionally, catalyzes the condensation of ATP and 5-phosphoribose 1-diphosphate to form N'-(5'-phosphoribosyl)-ATP (PR-ATP). Has a crucial role in the pathway because the rate of histidine biosynthesis seems to be controlled primarily by regulation of HisG enzymatic activity. In Shewanella oneidensis (strain ATCC 700550 / JCM 31522 / CIP 106686 / LMG 19005 / NCIMB 14063 / MR-1), this protein is ATP phosphoribosyltransferase.